The chain runs to 209 residues: Uracil phosphoribosyltransferase (209 aa).

5-phospho-alpha-D-ribose 1-diphosphate contacts are provided by residues arginine 79, arginine 104, and 131–139; that span reads DPMLATGNS. Residues isoleucine 194 and 199–201 contribute to the uracil site; that span reads GDA. A 5-phospho-alpha-D-ribose 1-diphosphate-binding site is contributed by aspartate 200.

The protein belongs to the UPRTase family. Mg(2+) serves as cofactor.

It carries out the reaction UMP + diphosphate = 5-phospho-alpha-D-ribose 1-diphosphate + uracil. The protein operates within pyrimidine metabolism; UMP biosynthesis via salvage pathway; UMP from uracil: step 1/1. Allosterically activated by GTP. In terms of biological role, catalyzes the conversion of uracil and 5-phospho-alpha-D-ribose 1-diphosphate (PRPP) to UMP and diphosphate. The polypeptide is Uracil phosphoribosyltransferase (Agrobacterium fabrum (strain C58 / ATCC 33970) (Agrobacterium tumefaciens (strain C58))).